The primary structure comprises 1201 residues: MPRGEAPGPGRRGAKDEALGEESGERWSPEFHLQRKLADSSHSEQQDRNRVSEELIMVVQEMKKYFPSERRNKPSTLDALNYALRCVHSVQANSEFFQILSQNGAPQADVSMYSLEELATIASEHTSKNTDTFVAVFSFLSGRLVHISEQAALILNRKKDVLASSHFVDLLAPQDMRVFYAHTARAQLPFWNNWTQRAARYECAPVKPFFCRIRGGEDRKQEKCHSPFRIIPYLIHVHHPAQPELESEPCCLTVVEKIHSGYEAPRIPVNKRIFTTTHTPGCVFLEVDEKAVPLLGYLPQDLIGTSILSYLHPEDRSLMVAIHQKVLKYAGHPPFEHSPIRFCTQNGDYIILDSSWSSFVNPWSRKISFIIGRHKVRTSPLNEDVFATKIKKMNDNDKDITELQEQIYKLLLQPVHVSVSSGYGSLGSSGSQEQLVSIASSSEASGHRVEETKAEQMTLQQVYASVNKIKNLGQQLYIESMTKSSFKPVTGTRTEPNGGGECKTFTSFHQTLKNNSVYTEPCEDLRNDEHSPSYQQINCIDSVIRYLKSYNIPALKRKCISCTNTTSSSSEEDKQNHKADDVQALQAGLQIPAIPKSEMPTNGRSIDTGGGAPQILSTAMLSLGSGISQCGYSSTIVHVPPPETARDATLFCEPWTLNMQPAPLTSEEFKHVGLTAAVLSAHTQKEEQNYVDKFREKILSSPYSSYLQQESRSKAKYSYFQGDSTSKQTRSAGCRKGKHKRKKLPEPPDSSSSNTGSGPRRGAHQNAQPCCPSAASSPHTSSPTFPPAAMVPSQAPYLVPAFPLPAATSPGREYAAPGTAPEGLHGLPLSEGLQPYPAFPFPYLDTFMTVFLPDPPVCPLLSPSFLPCPFLGATASSAISPSMSSAMSPTLDPPPSVTSQRREEEKWEAQSEGHPFITSRSSSPLQLNLLQEEMPRPSESPDQMRRNTCPQTEYCVTGNNGSESSPATTGALSTGSPPRENPSHPTASALSTGSPPMKNPSHPTASALSTGSPPMKNPSHPTASTLSMGLPPSRTPSHPTATVLSTGSPPSESPSRTGSAASGSSDSSIYLTSSVYSSKISQNGQQSQDVQKKETFPNVAEEPIWRMIRQTPERILMTYQVPERVKEVVLKEDLEKLESMRQQQPQFSHGQKEELAKVYNWIQSQTVTQEIDIQACVTCENEDSADGAATSCGQVLVEDSC.

The interval 1-50 (MPRGEAPGPGRRGAKDEALGEESGERWSPEFHLQRKLADSSHSEQQDRNR) is disordered. Positions 13 to 50 (GAKDEALGEESGERWSPEFHLQRKLADSSHSEQQDRNR) are enriched in basic and acidic residues. A Nuclear export signal 1 motif is present at residues 55–64 (LIMVVQEMKK). 2 PAS domains span residues 121 to 188 (IASE…RAQL) and 262 to 328 (YEAP…KVLK). In terms of domain architecture, PAC spans 337–380 (HSPIRFCTQNGDYIILDSSWSSFVNPWSRKISFIIGRHKVRTSP). The short motif at 403-412 (LQEQIYKLLL) is the Nuclear export signal 3 element. A CSNK1E binding domain region spans residues 555-760 (LKRKCISCTN…SSSNTGSGPR (206 aa)). Disordered regions lie at residues 717-788 (YSYF…FPPA) and 881-923 (PSMS…RSSS). Positions 721–731 (QGDSTSKQTRS) are enriched in polar residues. The Nuclear localization signal motif lies at 729–745 (TRSAGCRKGKHKRKKLP). Residues 733–743 (GCRKGKHKRKK) are compositionally biased toward basic residues. Low complexity-rich tracts occupy residues 767–783 (AQPCCPSAASSPHTSSP) and 881–890 (PSMSSAMSPT). Residues 900–911 (QRREEEKWEAQS) are compositionally biased toward basic and acidic residues. Serine 919 is subject to Phosphoserine. A Nuclear export signal 2 motif is present at residues 925-932 (LQLNLLQE). Residues 952-1067 (TEYCVTGNNG…GSAASGSSDS (116 aa)) form a disordered region. Composition is skewed to polar residues over residues 957–976 (TGNNGSESSPATTGALSTGS), 983–994 (SHPTASALSTGS), 1001–1012 (SHPTASALSTGS), and 1035–1050 (TPSHPTATVLSTGSPP). 5 repeat units span residues 965–982 (SPATTGALSTGSPPRENP), 983–1000 (SHPTASALSTGSPPMKNP), 1001–1018 (SHPTASALSTGSPPMKNP), 1019–1036 (SHPTASTLSMGLPPSRTP), and 1037–1054 (SHPTATVLSTGSPPSESP). The 5 X 18 AA tandem repeats of S-[HP]-[AP]-T-[AT]-[GST]-[ATV]-L-S-[MT]-G-[LS]-P-P-[MRS]-[EKR]-[NST]-P stretch occupies residues 965–1054 (SPATTGALST…STGSPPSESP (90 aa)). Serine 994 is modified (phosphoserine). Residue serine 1053 is modified to Phosphoserine. Over residues 1053–1067 (SPSRTGSAASGSSDS) the composition is skewed to low complexity. A CRY binding domain region spans residues 1123–1201 (ERVKEVVLKE…CGQVLVEDSC (79 aa)).

Homodimer. Component of the circadian core oscillator, which includes the CRY proteins, CLOCK or NPAS2, BMAL1 or BMAL2, CSNK1D and/or CSNK1E, TIMELESS and the PER proteins. Interacts directly with PER1, PER2, CRY1, CRY2, and TIMELESS; interaction with CRY1 and CRY2 is weak and not rhythmic. Interacts with FBXW11 and BTRC. Phosphorylation by CSNK1E is weak and appears to require association with PER1 and translocation to the nucleus. Post-translationally, ubiquitinated.

The protein localises to the cytoplasm. It localises to the nucleus. Functionally, originally described as a core component of the circadian clock. The circadian clock, an internal time-keeping system, regulates various physiological processes through the generation of approximately 24 hour circadian rhythms in gene expression, which are translated into rhythms in metabolism and behavior. It is derived from the Latin roots 'circa' (about) and 'diem' (day) and acts as an important regulator of a wide array of physiological functions including metabolism, sleep, body temperature, blood pressure, endocrine, immune, cardiovascular, and renal function. Consists of two major components: the central clock, residing in the suprachiasmatic nucleus (SCN) of the brain, and the peripheral clocks that are present in nearly every tissue and organ system. Both the central and peripheral clocks can be reset by environmental cues, also known as Zeitgebers (German for 'timegivers'). The predominant Zeitgeber for the central clock is light, which is sensed by retina and signals directly to the SCN. The central clock entrains the peripheral clocks through neuronal and hormonal signals, body temperature and feeding-related cues, aligning all clocks with the external light/dark cycle. Circadian rhythms allow an organism to achieve temporal homeostasis with its environment at the molecular level by regulating gene expression to create a peak of protein expression once every 24 hours to control when a particular physiological process is most active with respect to the solar day. Transcription and translation of core clock components (CLOCK, NPAS2, BMAL1, BMAL2, PER1, PER2, PER3, CRY1 and CRY2) plays a critical role in rhythm generation, whereas delays imposed by post-translational modifications (PTMs) are important for determining the period (tau) of the rhythms (tau refers to the period of a rhythm and is the length, in time, of one complete cycle). A diurnal rhythm is synchronized with the day/night cycle, while the ultradian and infradian rhythms have a period shorter and longer than 24 hours, respectively. Disruptions in the circadian rhythms contribute to the pathology of cardiovascular diseases, cancer, metabolic syndromes and aging. A transcription/translation feedback loop (TTFL) forms the core of the molecular circadian clock mechanism. Transcription factors, CLOCK or NPAS2 and BMAL1 or BMAL2, form the positive limb of the feedback loop, act in the form of a heterodimer and activate the transcription of core clock genes and clock-controlled genes (involved in key metabolic processes), harboring E-box elements (5'-CACGTG-3') within their promoters. The core clock genes: PER1/2/3 and CRY1/2 which are transcriptional repressors form the negative limb of the feedback loop and interact with the CLOCK|NPAS2-BMAL1|BMAL2 heterodimer inhibiting its activity and thereby negatively regulating their own expression. This heterodimer also activates nuclear receptors NR1D1, NR1D2, RORA, RORB and RORG, which form a second feedback loop and which activate and repress BMAL1 transcription, respectively. Has a redundant role with the other PER proteins PER1 and PER2 and is not essential for the circadian rhythms maintenance. In contrast, plays an important role in sleep-wake timing and sleep homeostasis probably through the transcriptional regulation of sleep homeostasis-related genes, without influencing circadian parameters. Can bind heme. The polypeptide is Period circadian protein homolog 3 (PER3) (Homo sapiens (Human)).